Here is a 1191-residue protein sequence, read N- to C-terminus: Rho GTPase-activating protein 20 (1191 aa).

Positions 1 to 23 (MEAMSPQQETLGGQPGRSSSLTG) are enriched in polar residues. A disordered region spans residues 1–45 (MEAMSPQQETLGGQPGRSSSLTGVSRLAGGSCTKKKMKTLAERRR). S46 carries the post-translational modification Phosphoserine. In terms of domain architecture, PH spans 78–180 (SLVCSNRTLL…EQKDKWLSLL (103 aa)). One can recognise a Ras-associating domain in the interval 194 to 295 (KSIPLKIFAK…TPFNLQEPFL (102 aa)). Positions 365-551 (ISLPNICEND…FLIENCLRIF (187 aa)) constitute a Rho-GAP domain. Phosphoserine occurs at positions 704 and 730. Disordered regions lie at residues 768-791 (SKKN…NHVK), 926-1014 (RLNL…SRPA), 1052-1123 (KKAK…RHCS), and 1140-1191 (HEEI…TKDI). Residues 934–961 (SYSSLSSPGTSPSGSSVSSQDSAFSQIS) are compositionally biased toward low complexity. Polar residues-rich tracts occupy residues 962-981 (EHSV…TFQA) and 1103-1116 (PVQS…SPFQ). Positions 1182–1191 (IEDRYLTKDI) are enriched in basic and acidic residues.

Expressed predominantly in the brain. Lower expression is found in lymph nodes.

Its function is as follows. GTPase activator for the Rho-type GTPases by converting them to an inactive GDP-bound state. The polypeptide is Rho GTPase-activating protein 20 (ARHGAP20) (Homo sapiens (Human)).